The following is a 93-amino-acid chain: Aspartyl/glutamyl-tRNA(Asn/Gln) amidotransferase subunit C (93 aa).

Belongs to the GatC family. In terms of assembly, heterotrimer of A, B and C subunits.

The catalysed reaction is L-glutamyl-tRNA(Gln) + L-glutamine + ATP + H2O = L-glutaminyl-tRNA(Gln) + L-glutamate + ADP + phosphate + H(+). It carries out the reaction L-aspartyl-tRNA(Asn) + L-glutamine + ATP + H2O = L-asparaginyl-tRNA(Asn) + L-glutamate + ADP + phosphate + 2 H(+). Its function is as follows. Allows the formation of correctly charged Asn-tRNA(Asn) or Gln-tRNA(Gln) through the transamidation of misacylated Asp-tRNA(Asn) or Glu-tRNA(Gln) in organisms which lack either or both of asparaginyl-tRNA or glutaminyl-tRNA synthetases. The reaction takes place in the presence of glutamine and ATP through an activated phospho-Asp-tRNA(Asn) or phospho-Glu-tRNA(Gln). This Helicobacter pylori (strain HPAG1) protein is Aspartyl/glutamyl-tRNA(Asn/Gln) amidotransferase subunit C.